Here is a 264-residue protein sequence, read N- to C-terminus: MSGSTITPWVVGNWKMNPMRANANQLIEEFKQLLQQNQIADENCHVGVAPVSIALTTVQAQLQDAARTVYTVAQDVSRVAGTGAYTGEVSAELLKDSQINFVLVGHSERRDIFGDNVEILKAKLQNALNAGMTVIYCVGESLEQREQGQAEQVVLQQICDIAPVVTAEQWQNQVVIAYEPIWAIGTGKTASPQDAQAMHAKIREGLCQLTPAGSNIAILYGGSVKAENAVELAACPDINGALVGGASLNAASFYQIVQAFAQSK.

13 to 15 (NWK) contacts substrate. The Electrophile role is filled by H106. Catalysis depends on E179, which acts as the Proton acceptor. Residues G185, S223, and 244–245 (GG) contribute to the substrate site.

This sequence belongs to the triosephosphate isomerase family. In terms of assembly, homodimer.

It localises to the cytoplasm. The enzyme catalyses D-glyceraldehyde 3-phosphate = dihydroxyacetone phosphate. The protein operates within carbohydrate biosynthesis; gluconeogenesis. Its pathway is carbohydrate degradation; glycolysis; D-glyceraldehyde 3-phosphate from glycerone phosphate: step 1/1. Involved in the gluconeogenesis. Catalyzes stereospecifically the conversion of dihydroxyacetone phosphate (DHAP) to D-glyceraldehyde-3-phosphate (G3P). The chain is Triosephosphate isomerase from Acinetobacter baumannii (strain SDF).